A 484-amino-acid chain; its full sequence is ATP synthase subunit beta (484 aa).

152 to 159 is an ATP binding site; sequence GGAGVGKT.

It belongs to the ATPase alpha/beta chains family. As to quaternary structure, F-type ATPases have 2 components, CF(1) - the catalytic core - and CF(0) - the membrane proton channel. CF(1) has five subunits: alpha(3), beta(3), gamma(1), delta(1), epsilon(1). CF(0) has three main subunits: a(1), b(2) and c(9-12). The alpha and beta chains form an alternating ring which encloses part of the gamma chain. CF(1) is attached to CF(0) by a central stalk formed by the gamma and epsilon chains, while a peripheral stalk is formed by the delta and b chains.

It is found in the cell inner membrane. It catalyses the reaction ATP + H2O + 4 H(+)(in) = ADP + phosphate + 5 H(+)(out). Its function is as follows. Produces ATP from ADP in the presence of a proton gradient across the membrane. The catalytic sites are hosted primarily by the beta subunits. This Campylobacter lari (strain RM2100 / D67 / ATCC BAA-1060) protein is ATP synthase subunit beta.